A 315-amino-acid chain; its full sequence is Biotin synthase (315 aa).

The Radical SAM core domain maps to 39–266; that stretch reads NSLQFATLLS…KSAIRLTAGR (228 aa). Positions 54, 58, and 61 each coordinate [4Fe-4S] cluster. Positions 98, 129, 189, and 261 each coordinate [2Fe-2S] cluster.

Belongs to the radical SAM superfamily. Biotin synthase family. Homodimer. Requires [4Fe-4S] cluster as cofactor. [2Fe-2S] cluster serves as cofactor.

The catalysed reaction is (4R,5S)-dethiobiotin + (sulfur carrier)-SH + 2 reduced [2Fe-2S]-[ferredoxin] + 2 S-adenosyl-L-methionine = (sulfur carrier)-H + biotin + 2 5'-deoxyadenosine + 2 L-methionine + 2 oxidized [2Fe-2S]-[ferredoxin]. It participates in cofactor biosynthesis; biotin biosynthesis; biotin from 7,8-diaminononanoate: step 2/2. Functionally, catalyzes the conversion of dethiobiotin (DTB) to biotin by the insertion of a sulfur atom into dethiobiotin via a radical-based mechanism. This is Biotin synthase from Legionella pneumophila (strain Lens).